Here is a 372-residue protein sequence, read N- to C-terminus: Glutamate 5-kinase (372 aa).

K14 contributes to the ATP binding site. Substrate-binding residues include S54, D141, and N153. 173-174 (TD) contributes to the ATP binding site. The PUA domain occupies 280–358 (AGAVVLDNGA…ADIAAILGFV (79 aa)).

This sequence belongs to the glutamate 5-kinase family.

It localises to the cytoplasm. It catalyses the reaction L-glutamate + ATP = L-glutamyl 5-phosphate + ADP. It functions in the pathway amino-acid biosynthesis; L-proline biosynthesis; L-glutamate 5-semialdehyde from L-glutamate: step 1/2. Catalyzes the transfer of a phosphate group to glutamate to form L-glutamate 5-phosphate. In Janthinobacterium sp. (strain Marseille) (Minibacterium massiliensis), this protein is Glutamate 5-kinase.